We begin with the raw amino-acid sequence, 642 residues long: Threonine--tRNA ligase (642 aa).

Residues 1–61 enclose the TGS domain; it reads MPVITLPDGS…ETDAELSIIT (61 aa). Residues 243 to 534 are catalytic; the sequence is DHRKIGKQLD…LIEEYAGRFP (292 aa). Zn(2+) is bound by residues Cys334, His385, and His511.

This sequence belongs to the class-II aminoacyl-tRNA synthetase family. As to quaternary structure, homodimer. The cofactor is Zn(2+).

The protein localises to the cytoplasm. It catalyses the reaction tRNA(Thr) + L-threonine + ATP = L-threonyl-tRNA(Thr) + AMP + diphosphate + H(+). Its function is as follows. Catalyzes the attachment of threonine to tRNA(Thr) in a two-step reaction: L-threonine is first activated by ATP to form Thr-AMP and then transferred to the acceptor end of tRNA(Thr). Also edits incorrectly charged L-seryl-tRNA(Thr). This chain is Threonine--tRNA ligase, found in Shewanella sp. (strain MR-7).